Here is a 373-residue protein sequence, read N- to C-terminus: 3-isopropylmalate dehydrogenase (373 aa).

82-93 (GPKWGTGALRPE) is a binding site for NAD(+). Substrate is bound by residues arginine 100, arginine 110, arginine 139, and aspartate 231. Mg(2+)-binding residues include aspartate 231, aspartate 256, and aspartate 260. NAD(+) is bound at residue 295–306 (GSAPDLPANKVN).

This sequence belongs to the isocitrate and isopropylmalate dehydrogenases family. In terms of assembly, homodimer. Requires Mg(2+) as cofactor. Mn(2+) is required as a cofactor.

It localises to the cytoplasm. It carries out the reaction (2R,3S)-3-isopropylmalate + NAD(+) = 4-methyl-2-oxopentanoate + CO2 + NADH. Its pathway is amino-acid biosynthesis; L-leucine biosynthesis; L-leucine from 3-methyl-2-oxobutanoate: step 3/4. Its function is as follows. Catalyzes the oxidation of 3-carboxy-2-hydroxy-4-methylpentanoate (3-isopropylmalate) to 3-carboxy-4-methyl-2-oxopentanoate. The product decarboxylates to 4-methyl-2 oxopentanoate. This is 3-isopropylmalate dehydrogenase (LEU2) from Candida maltosa (Yeast).